The primary structure comprises 335 residues: Leukocyte cell-derived chemotaxin 1 (335 aa).

Residues 45 to 65 traverse the membrane as a helical segment; the sequence is VVLISGAVLLLLGAIGAFYFW. In terms of domain architecture, BRICHOS spans 104–201; the sequence is GSGAEEAVEV…LCGDLPIFWL (98 aa). Cys-131 and Cys-193 are joined by a disulfide. Residues 211–214 constitute a propeptide that is removed on maturation; the sequence is RERR. Positions 221–269 are disordered; that stretch reads VTTTTTRRLRSGPQGTPAPGRPNNGTRPSVQEDAEPFNPDNPYHQQEGE. Residue Thr-223 is glycosylated (N-linked (GlcNAc...) asparagine; in variant 223-N-E-224). An O-linked (GalNAc...) threonine; partial glycan is attached at Thr-236. N-linked (GlcNAc...) asparagine glycosylation is present at Asn-244. 4 disulfide bridges follow: Cys-283–Cys-287, Cys-284–Cys-324, Cys-294–Cys-318, and Cys-298–Cys-314.

The protein belongs to the chondromodulin-1 family. In terms of processing, after cleavage, the post-translationally modified ChM-I is secreted as a glycoprotein. Post-translationally, two other smaller nonglycosylated chondromodulin forms (9 kDa and 7 kDa) are found either in developing articular cartilage or in chondrocytes. The 9 kDa form could be processed by an extracellular matrix-associated protease as a metalloproteinase and the 7 kDa form could be processed intracellularly. In terms of tissue distribution, nasal and articular cartilage, and fetal epiphysis.

It localises to the secreted. The protein resides in the extracellular space. The protein localises to the extracellular matrix. Its subcellular location is the endomembrane system. Its function is as follows. Bifunctional growth regulator that stimulates the growth of cultured chondrocytes in the presence of basic fibroblast growth factor (FGF) but inhibits the growth of cultured vascular endothelial cells. May contribute to the rapid growth of cartilage and vascular invasion prior to the replacement of cartilage by bone during endochondral bone development. Inhibits in vitro tube formation and mobilization of endothelial cells. Plays a role as antiangiogenic factor in cardiac valves to suppress neovascularization. The polypeptide is Leukocyte cell-derived chemotaxin 1 (Bos taurus (Bovine)).